The sequence spans 192 residues: MSTTVDVPESSNVAKGKAIAVARPGGWKKGLAIMDFILRLGGIAASLGAAATMGTSDQTLPFFTQFFQFEASYDSFTTFQFFVITMALVAGYLVLSLPFSVVAIIRPHAPGPRLFLIILDTVFLTLATASGASAAAIVYLAHNGNQDSNWLAICNQFGDFCAQTSGAVVASFVAVVILVLLVIMSALALRRH.

At 1–30 (MSTTVDVPESSNVAKGKAIAVARPGGWKKG) the chain is on the cytoplasmic side. Residues 31–51 (LAIMDFILRLGGIAASLGAAA) form a helical membrane-spanning segment. The Extracellular segment spans residues 52–80 (TMGTSDQTLPFFTQFFQFEASYDSFTTFQ). A helical membrane pass occupies residues 81-101 (FFVITMALVAGYLVLSLPFSV). Over 102 to 113 (VAIIRPHAPGPR) the chain is Cytoplasmic. A helical membrane pass occupies residues 114 to 134 (LFLIILDTVFLTLATASGASA). Over 135–166 (AAIVYLAHNGNQDSNWLAICNQFGDFCAQTSG) the chain is Extracellular. The helical transmembrane segment at 167–187 (AVVASFVAVVILVLLVIMSAL) threads the bilayer. Over 188–192 (ALRRH) the chain is Cytoplasmic.

Belongs to the Casparian strip membrane proteins (CASP) family. As to quaternary structure, homodimer and heterodimers.

The protein resides in the cell membrane. Functionally, regulates membrane-cell wall junctions and localized cell wall deposition. Required for establishment of the Casparian strip membrane domain (CSD) and the subsequent formation of Casparian strips, a cell wall modification of the root endodermis that determines an apoplastic barrier between the intraorganismal apoplasm and the extraorganismal apoplasm and prevents lateral diffusion. The protein is Casparian strip membrane protein 1 of Vigna unguiculata (Cowpea).